A 434-amino-acid polypeptide reads, in one-letter code: D-amino acid dehydrogenase (434 aa).

Residue 3 to 17 coordinates FAD; sequence VLVLGSGVIGTASAY.

This sequence belongs to the DadA oxidoreductase family. The cofactor is FAD.

It catalyses the reaction a D-alpha-amino acid + A + H2O = a 2-oxocarboxylate + AH2 + NH4(+). It participates in amino-acid degradation; D-alanine degradation; NH(3) and pyruvate from D-alanine: step 1/1. Its function is as follows. Oxidative deamination of D-amino acids. This Pseudomonas entomophila (strain L48) protein is D-amino acid dehydrogenase.